A 231-amino-acid chain; its full sequence is Ribosyldihydronicotinamide dehydrogenase [quinone] (231 aa).

FAD is bound by residues H12, F18–S21, and L104–F107. F127–V129 provides a ligand contact to substrate. FAD is bound by residues T148–G151 and Y156. The Zn(2+) site is built by H174 and H178. E194 provides a ligand contact to FAD. Phosphoserine is present on S197. R201 contributes to the FAD binding site. C223 is a Zn(2+) binding site.

Belongs to the NAD(P)H dehydrogenase (quinone) family. In terms of assembly, homodimer. It depends on Zn(2+) as a cofactor. Requires FAD as cofactor.

It localises to the cytoplasm. It carries out the reaction 1-(beta-D-ribofuranosyl)-1,4-dihydronicotinamide + a quinone + H(+) = beta-nicotinamide D-riboside + a quinol. Its function is as follows. The enzyme apparently serves as a quinone reductase in connection with conjugation reactions of hydroquinones involved in detoxification pathways as well as in biosynthetic processes such as the vitamin K-dependent gamma-carboxylation of glutamate residues in prothrombin synthesis. The protein is Ribosyldihydronicotinamide dehydrogenase [quinone] (Nqo2) of Rattus norvegicus (Rat).